Reading from the N-terminus, the 491-residue chain is MLSFPKGFKFGWSQSGFQSEMGTPGSEDPNSDWHVWVHDRENIVSQVVSGDLPENGPGYWGNYKRFHDEAEKIGLNAVRINVEWSRIFPRPLPKPEMQTGTDKENSPVISVDLNESKLREMDNYANHEALSHYRQILEDLRNRGFHIVLNMYHWTLPIWLHDPIRVRRGDFTGPTGWLNSRTVYEFARFSAYVAWKLDDLASEYATMNEPNVVWGAGYAFPRAGFPPNYLSFRLSEIAKWNIIQAHARAYDAIKSVSKKSVGIIYANTSYYPLRPQDNEAVEIAERLNRWSFFDSIIKGEITSEGQNVREDLRNRLDWIGVNYYTRTVVTKAESGYLTLPGYGDRCERNSLSLANLPTSDFGWEFFPEGLYDVLLKYWNRYGLPLYVMENGIADDADYQRPYYLVSHIYQVHRALNEGVDVRGYLHWSLADNYEWSSGFSMRFGLLKVDYLTKRLYWRPSALVYREITRSNGIPEELEHLNRVPPIKPLRH.

Glu-209 acts as the Proton donor in catalysis. Residue Glu-389 is the Nucleophile of the active site.

It belongs to the glycosyl hydrolase 1 family.

The enzyme catalyses Hydrolysis of terminal non-reducing beta-D-galactose residues in beta-D-galactosides.. The chain is Beta-galactosidase (bgaS) from Sulfolobus acidocaldarius (strain ATCC 33909 / DSM 639 / JCM 8929 / NBRC 15157 / NCIMB 11770).